We begin with the raw amino-acid sequence, 78 residues long: Consomatin Te1 (78 aa).

Positions 1–22 are cleaved as a signal peptide; it reads MQTAYWMMVMMMVWITAPLSEG. Residues 23–56 constitute a propeptide that is removed on maturation; it reads GQLNDVIRGLVPDNLAPQLVLQSLDSRRHPHGIR. Residues Cys-63 and Cys-68 are joined by a disulfide bond. Trp-65 is subject to D-tryptophan. 4-hydroxyproline occurs at positions 69, 70, and 72. Positions 74–78 are excised as a propeptide; sequence RRLGS.

This sequence belongs to the conotoxin C superfamily. Consomatin family. In terms of tissue distribution, expressed by the venom duct.

Its subcellular location is the secreted. Moderately activates human somatostatin receptors (SSTR) with a preferential activation of SSTR1 and SSTR4. In vivo, does not cause behavioral changes in mice within a few minutes of intracranial injection, but causes a progressive loss of movement thereafter. Four to five hours after injection, mice recover, even with the highest dose tested. Shows antinociception and antihyperalgesia activities in two mouse models of acute pain, most probably by acting outside the central nervous system. The protein is Consomatin Te1 of Conus terebra (Sea snail).